Consider the following 370-residue polypeptide: MGSTGNAETQLTPTHVSDEEANLFAMQLASASVLPMVLKAAIELDVLEIMAKSIPHGSGAYISPAEIAAQLPTTNPDAPVMLDRVLRLLASYSVVTCSLRELPDGKVERLYGLAPVCKFLTKNEDGVSLAPLCLMNQDKVLMESWYYLKDAILDGGIPFNKAYGMTAFEYHGTDPRFNKVFNRGMSDHSTITMKKIFEMYTGFEALNTIVDVGGGTGAVLSMIVAKYPSIKGINFDLPHVIEDAPIYPGVEHVGGDMFVSVPKGDAIFMKWICHDWSDEHCLKFLKNCYAALPEHGKVIVAECILPLSPDPSLATKGVIHIDAIMLAHNPGGKERTEKEFEALAIGAGFKGFKVACCAFNTYVMEFLKTA.

Residues 1 to 2 (MG) constitute a propeptide that is removed on maturation. 135–141 (MNQDKVL) is a binding site for substrate. Residues 167–185 (AFEYHGTDPRFNKVFNRGM) are substrate binding. Residues Gly-213, Asp-236, Asp-256, Met-257, and Lys-270 each contribute to the S-adenosyl-L-methionine site. Residue His-274 is the Proton acceptor of the active site.

It belongs to the class I-like SAM-binding methyltransferase superfamily. Cation-independent O-methyltransferase family. COMT subfamily. As to quaternary structure, homodimer.

The enzyme catalyses (E)-caffeate + S-adenosyl-L-methionine = (E)-ferulate + S-adenosyl-L-homocysteine + H(+). It functions in the pathway aromatic compound metabolism; phenylpropanoid biosynthesis. Functionally, catalyzes the conversion of caffeic acid to ferulic acid and of 5-hydroxyferulic acid to sinapic acid. The resulting products may subsequently be converted to the corresponding alcohols that are incorporated into lignins. This chain is Caffeic acid 3-O-methyltransferase (COMT), found in Clarkia breweri (Fairy fans).